Reading from the N-terminus, the 247-residue chain is 14-3-3 protein gamma (247 aa).

Met1 is modified (N-acetylmethionine; in 14-3-3 protein gamma; alternate; partial). Val2 carries the post-translational modification N-acetylvaline; in 14-3-3 protein gamma, N-terminally processed; partial. Val2 carries the N-acetylvaline; partial modification. Positions 2-166 (VDREQLVQKA…AHEISKEHMQ (165 aa)) are required for interaction with SPATA18/MIEAP (isoform 2) but dispensable for binding to SPATA18/MIEAP (isoform 1). The segment at 2-247 (VDREQLVQKA…QDDDGGEGNN (246 aa)) is interaction with SPATA18/MIEAP. Ser71 carries the post-translational modification Phosphoserine. Tyr133 is subject to Phosphotyrosine. The residue at position 145 (Thr145) is a Phosphothreonine. At Ser215 the chain carries Phosphoserine. Thr234 carries the phosphothreonine modification. The residue at position 235 (Ser235) is a Phosphoserine.

The protein belongs to the 14-3-3 family. Homodimer. Part of a complex that contains DSG3, PKP1, YAP1 and YWHAG; the complex is required for localization of DSG3 and YAP1 to the cell membrane in keratinocytes. Interacts with SAMSN1. Interacts with RAF1, SSH1 and CRTC2/TORC2. Interacts with ABL1 (phosphorylated form); the interaction retains it in the cytoplasm. Interacts with GAB2. Interacts with MDM4 (phosphorylated); negatively regulates MDM4 activity toward TP53. Interacts with PKA-phosphorylated AANAT and SIRT2. Interacts with the 'Thr-369' phosphorylated form of DAPK2. Interacts with PI4KB, TBC1D22A and TBC1D22B. Interacts with SLITRK1. Interacts with LRRK2; this interaction is dependent on LRRK2 phosphorylation. Interacts with MARK2 and MARK3. Interacts with MEFV. Interacts with ENDOG, TSC2 and PIK3C3; interaction with ENDOG weakens its interaction with TSC2 and PIK3C3. Interacts with (phosphorylated) WDR24. Interacts with BEST1; this interaction promotes L-glutamate channel activity leading to the positive regulation of NMDA glutamate receptor activity through the L-glutamate secretion. Interacts with PKP1 (when phosphorylated); the interaction results in translocation of PKP1 to the cytoplasm and loss of intercellular adhesion in keratinocytes. Interacts with SPATA18/MIEAP (isoforms 1 and 2); a protein that also plays a role in MALM. Post-translationally, phosphorylated by various PKC isozymes. Highly expressed in brain, skeletal muscle, and heart.

The protein localises to the cytoplasm. Its subcellular location is the cytosol. It localises to the mitochondrion matrix. Functionally, adapter protein implicated in the regulation of a large spectrum of both general and specialized signaling pathways. Binds to a large number of partners, usually by recognition of a phosphoserine or phosphothreonine motif. Binding generally results in the modulation of the activity of the binding partner. Promotes inactivation of WDR24 component of the GATOR2 complex by binding to phosphorylated WDR24. Participates in the positive regulation of NMDA glutamate receptor activity by promoting the L-glutamate secretion through interaction with BEST1. Reduces keratinocyte intercellular adhesion, via interacting with PKP1 and sequestering it in the cytoplasm, thereby reducing its incorporation into desmosomes. Plays a role in mitochondrial protein catabolic process (also named MALM) that promotes the degradation of damaged proteins inside mitochondria. This Homo sapiens (Human) protein is 14-3-3 protein gamma.